Reading from the N-terminus, the 712-residue chain is Polyribonucleotide nucleotidyltransferase (712 aa).

Residues Asp484 and Asp490 each coordinate Mg(2+). Residues 550–609 enclose the KH domain; it reads PKYKTMDVNPEKIRVLIGPGGKNIKAIIEETGSDVEIQDSGVVNIFAPDTPTLDKTIKLI. The S1 motif domain maps to 619–686; sequence GEVYDGIVKD…KGGKYSLSRK (68 aa).

It belongs to the polyribonucleotide nucleotidyltransferase family. Mg(2+) is required as a cofactor.

It is found in the cytoplasm. The catalysed reaction is RNA(n+1) + phosphate = RNA(n) + a ribonucleoside 5'-diphosphate. Involved in mRNA degradation. Catalyzes the phosphorolysis of single-stranded polyribonucleotides processively in the 3'- to 5'-direction. This chain is Polyribonucleotide nucleotidyltransferase, found in Brachyspira hyodysenteriae (strain ATCC 49526 / WA1).